A 638-amino-acid chain; its full sequence is 3D-(3,5/4)-trihydroxycyclohexane-1,2-dione hydrolase (638 aa).

A thiamine diphosphate-binding site is contributed by E67. Residues 442 to 523 form a thiamine pyrophosphate binding region; sequence SLPGDLQRLW…INIMLFDNSG (82 aa). Mg(2+) is bound by residues D494 and N521.

Belongs to the TPP enzyme family. It depends on Mg(2+) as a cofactor. Requires thiamine diphosphate as cofactor.

The enzyme catalyses 3D-3,5/4-trihydroxycyclohexane-1,2-dione + H2O = 5-deoxy-D-glucuronate + H(+). The protein operates within polyol metabolism; myo-inositol degradation into acetyl-CoA; acetyl-CoA from myo-inositol: step 3/7. Its function is as follows. Involved in the cleavage of the C1-C2 bond of 3D-(3,5/4)-trihydroxycyclohexane-1,2-dione (THcHDO) to yield 5-deoxy-glucuronate (5DG). This chain is 3D-(3,5/4)-trihydroxycyclohexane-1,2-dione hydrolase, found in Listeria monocytogenes serovar 1/2a (strain ATCC BAA-679 / EGD-e).